The chain runs to 169 residues: Disulfide bond formation protein B (169 aa).

The Cytoplasmic portion of the chain corresponds to 1 to 13 (MSQLQQFCHNRFS). Residues 14–30 (WGLLLLSAIGLELAALF) traverse the membrane as a helical segment. Residues 31–48 (FQYGMDLAPCVMCIYIRV) lie on the Periplasmic side of the membrane. Residues C40 and C43 are joined by a disulfide bond. A helical membrane pass occupies residues 49–64 (AVLGIILAALIGILQP). The Cytoplasmic segment spans residues 65–71 (KVWLLRL). The chain crosses the membrane as a helical span at residues 72-89 (VGMAGWAVSAVWGFKLAY). At 90 to 144 (ELNQMQVNPSPFATCSFYPEFPSFMPLDTWLPSVFSPTGMCSDSPWSWLSVSMAQ) the chain is on the periplasmic side. C104 and C130 are disulfide-bonded. The chain crosses the membrane as a helical span at residues 145 to 163 (WMMLGFAIYGVIWLLMLLP). The Cytoplasmic portion of the chain corresponds to 164–169 (ALKSAK).

This sequence belongs to the DsbB family.

The protein resides in the cell inner membrane. Functionally, required for disulfide bond formation in some periplasmic proteins. Acts by oxidizing the DsbA protein. This is Disulfide bond formation protein B from Shewanella frigidimarina (strain NCIMB 400).